Here is a 106-residue protein sequence, read N- to C-terminus: CRISPR-associated endoribonuclease Cas2 (106 aa).

Aspartate 22 is a binding site for Mg(2+).

This sequence belongs to the CRISPR-associated endoribonuclease Cas2 protein family. Homodimer, forms a heterotetramer with a Cas1 homodimer. Mg(2+) serves as cofactor.

Its function is as follows. CRISPR (clustered regularly interspaced short palindromic repeat), is an adaptive immune system that provides protection against mobile genetic elements (viruses, transposable elements and conjugative plasmids). CRISPR clusters contain sequences complementary to antecedent mobile elements and target invading nucleic acids. CRISPR clusters are transcribed and processed into CRISPR RNA (crRNA). Functions as a ssRNA-specific endoribonuclease. Involved in the integration of spacer DNA into the CRISPR cassette. The polypeptide is CRISPR-associated endoribonuclease Cas2 (Fusobacterium nucleatum subsp. nucleatum (strain ATCC 25586 / DSM 15643 / BCRC 10681 / CIP 101130 / JCM 8532 / KCTC 2640 / LMG 13131 / VPI 4355)).